An 85-amino-acid chain; its full sequence is Delta/kappa-theraphotoxin-Pm1a (85 aa).

An N-terminal signal peptide occupies residues 1–19; it reads MKTFVFIVLVALAFVLTAA. The propeptide occupies 20-43; sequence KEERANPSELVSALAELVMLDAER. Disulfide bonds link cysteine 50/cysteine 64, cysteine 57/cysteine 69, and cysteine 63/cysteine 77.

Belongs to the neurotoxin 10 (Hwtx-1) family. In terms of tissue distribution, expressed by the venom gland.

It is found in the secreted. Multimodal toxin that enhances nociceptor excitability mainly by the simultaneous stimulation of repetitive firing (through Nav1.8/SCN10A channel current enhancement) and impairment of repolarization (by inhibiting delayed rectifier current of Kv2.1/KCNB1), with a potential contribution from tetrodotoxin-sensitive voltage-gated sodium channels (Nav) modified excitability. Enhances Nav1.8/SCN10A currents (EC(50)=1.1 uM), modifies the channel gating by a right-shift in steady-state inactivation and delays open-state inactivation. Also decreases Kv2.1/KCNB1 currents (IC(50)=0.43 uM) and causes a depolarizing shift in the voltage dependence of activation without change in steady-state inactivation. In addition, inhibits peak currents of human sodium channels (Nav1.1 to Nav1.7, IC(50)=0.38-2.3 uM) and delays fast inactivation of Nav1.1/SCN1A, Nav1.3/SCN3A, Nav1.6/SCN8A, and Nav1.7/SCN9A. In small dorsal root ganglion neurons, induces hyperexcitability by enhancing tetrodotoxin-resistant sodium currents, impairing repolarization and lowering the threshold of action potential firing, consistent with the severe pain associated with envenomation. In vivo, elicits nocifensive behavior in mice after intraplantar injection. The sequence is that of Delta/kappa-theraphotoxin-Pm1a from Pelinobius muticus (King baboon spider).